We begin with the raw amino-acid sequence, 376 residues long: N-acetyldiaminopimelate deacetylase (376 aa).

The active site involves Asp-70. The Proton acceptor role is filled by Glu-129.

This sequence belongs to the peptidase M20A family. N-acetyldiaminopimelate deacetylase subfamily.

The enzyme catalyses N-acetyl-(2S,6S)-2,6-diaminopimelate + H2O = (2S,6S)-2,6-diaminopimelate + acetate. It participates in amino-acid biosynthesis; L-lysine biosynthesis via DAP pathway; LL-2,6-diaminopimelate from (S)-tetrahydrodipicolinate (acetylase route): step 3/3. Its function is as follows. Catalyzes the conversion of N-acetyl-diaminopimelate to diaminopimelate and acetate. The polypeptide is N-acetyldiaminopimelate deacetylase (Geobacillus sp. (strain WCH70)).